Consider the following 402-residue polypeptide: Nicotinate phosphoribosyltransferase (402 aa).

His224 carries the phosphohistidine; by autocatalysis modification.

The protein belongs to the NAPRTase family. In terms of processing, transiently phosphorylated on a His residue during the reaction cycle. Phosphorylation strongly increases the affinity for substrates and increases the rate of nicotinate D-ribonucleotide production. Dephosphorylation regenerates the low-affinity form of the enzyme, leading to product release.

It carries out the reaction nicotinate + 5-phospho-alpha-D-ribose 1-diphosphate + ATP + H2O = nicotinate beta-D-ribonucleotide + ADP + phosphate + diphosphate. Its pathway is cofactor biosynthesis; NAD(+) biosynthesis; nicotinate D-ribonucleotide from nicotinate: step 1/1. In terms of biological role, catalyzes the synthesis of beta-nicotinate D-ribonucleotide from nicotinate and 5-phospho-D-ribose 1-phosphate at the expense of ATP. This is Nicotinate phosphoribosyltransferase from Neisseria meningitidis serogroup A / serotype 4A (strain DSM 15465 / Z2491).